Here is a 300-residue protein sequence, read N- to C-terminus: Diphthine methyl ester synthase (300 aa).

Residues Leu9, Asp85, Gly88, Ser113–Val114, and Leu164 each bind S-adenosyl-L-methionine. Ser172 is modified (phosphoserine). Residues Leu222 and His247 each coordinate S-adenosyl-L-methionine. Ser298 bears the Phosphoserine mark.

This sequence belongs to the diphthine synthase family.

The protein localises to the cytoplasm. It catalyses the reaction 2-[(3S)-amino-3-carboxypropyl]-L-histidyl-[translation elongation factor 2] + 4 S-adenosyl-L-methionine = diphthine methyl ester-[translation elongation factor 2] + 4 S-adenosyl-L-homocysteine + 3 H(+). The protein operates within protein modification; peptidyl-diphthamide biosynthesis. S-adenosyl-L-methionine-dependent methyltransferase that catalyzes four methylations of the modified target histidine residue in translation elongation factor 2 (EF-2), to form an intermediate called diphthine methyl ester. The four successive methylation reactions represent the second step of diphthamide biosynthesis. This Saccharomyces cerevisiae (strain ATCC 204508 / S288c) (Baker's yeast) protein is Diphthine methyl ester synthase (DPH5).